The chain runs to 260 residues: MALRRPMVAGNWKMNGSAQLAQELFKKFATKLQNDSAEVVLCPPSIYLESVRQLLDENKEALNGCLVRMGTQNVSQHDFGAYTGEISGQMLKDSGCRYVIIGHSERRRMYGETSDIVAEKFAAAQKHGLTPILCVGESGPAREARRTFEVIAEELDVVIEKNGTMAFDNAIIAYEPLWAVGTGKSATPEQAQEVHAFIRKRLSEVSPFIGENIRILYGGSVTPSNAADLFAQPDVDGGLIGGVSLNATEFLSLCTIAMSA.

Asn11–Lys13 is a binding site for substrate. Catalysis depends on His103, which acts as the Electrophile. The active-site Proton acceptor is the Glu175. Substrate contacts are provided by residues Gly181, Ser220, and Gly241–Gly242.

This sequence belongs to the triosephosphate isomerase family. In terms of assembly, homodimer.

The protein localises to the cytoplasm. The enzyme catalyses D-glyceraldehyde 3-phosphate = dihydroxyacetone phosphate. The protein operates within carbohydrate biosynthesis; gluconeogenesis. Its pathway is carbohydrate degradation; glycolysis; D-glyceraldehyde 3-phosphate from glycerone phosphate: step 1/1. In terms of biological role, involved in the gluconeogenesis. Catalyzes stereospecifically the conversion of dihydroxyacetone phosphate (DHAP) to D-glyceraldehyde-3-phosphate (G3P). This is Triosephosphate isomerase from Shewanella piezotolerans (strain WP3 / JCM 13877).